A 183-amino-acid chain; its full sequence is 16 kDa gamma-zein (183 aa).

The signal sequence occupies residues 1 to 19 (MKVLIVALALLALAASAAS).

Interacts with OP10 (via N-terminus).

It is found in the vacuole. The protein localises to the aleurone grain. Functionally, zeins are major seed storage proteins. This chain is 16 kDa gamma-zein, found in Zea mays (Maize).